A 579-amino-acid polypeptide reads, in one-letter code: MFAKAFRVKSNTAIKGSDRRKLRADVAAVFPTLGTDQVSELVPGKEELNIVKLYAHRGDAVTVYVSGGNPILFELEKNLYPTVYTLWSYPDLLPTFTTWPLVLEKLVGGADLMLPGLVVPPAGLPQVQKGDLCAVALVGNRAPVAVGVAAMSTAEMLASGLKGRGFCVLHSYQDHLWRSGDKSSPPSIAPLALNPPDLSEGKGCVKADTALQGAMRQLTLEEEVQQRCEEKSPSEATEDPGPGGLHVDPMDSKTLQEQMDELLQTCFLHALKCSVRKADLPLLTSTLLGSHMFSCCPEGRQLDIKKSSYKKLSKFLQHMQQEQIIQVQELSKGVESIVAVDWKHPRITSFVIPEPSPTSQTIQEGSREQPYHPPDIKPLYCVPASMTLLFQESGHKKGSVLEGSEVRTFVINYAKKNDLVDADNKNLVKLDPILCDCILEKDEQHTVTKLPWDSLLGRCLEKLQPAYQVTFPGQEPIVKKGRICPIDITLAQKASNKKVTVVRNLEAYGLDPRSVAATLQQRCQASTTVTSAPGLKDSVQVQIQGNQIHHLGRLLLEEYRLPRKHIQGLEKAPKPGKKK.

The residue at position 1 (M1) is an N-acetylmethionine. Residues 93–173 enclose the PUA domain; that stretch reads LPTFTTWPLV…RGFCVLHSYQ (81 aa). The interval 222–250 is disordered; sequence EEVQQRCEEKSPSEATEDPGPGGLHVDPM. A compositionally biased stretch (basic and acidic residues) spans 224 to 233; the sequence is VQQRCEEKSP. S232 and S356 each carry phosphoserine. In terms of domain architecture, SWIB/MDM2 spans 378–462; the sequence is PLYCVPASMT…DSLLGRCLEK (85 aa). An SUI1 domain is found at 486–559; that stretch reads IDITLAQKAS…HLGRLLLEEY (74 aa).

This sequence belongs to the eIF2D family.

Its subcellular location is the cytoplasm. Functionally, translation initiation factor that is able to deliver tRNA to the P-site of the eukaryotic ribosome in a GTP-independent manner. The binding of Met-tRNA(I) occurs after the AUG codon finds its position in the P-site of 40S ribosomes, the situation that takes place during initiation complex formation on some specific RNAs. Its activity in tRNA binding with 40S subunits does not require the presence of the aminoacyl moiety. Possesses the unique ability to deliver non-Met (elongator) tRNAs into the P-site of the 40S subunit. In addition to its role in initiation, can promote release of deacylated tRNA and mRNA from recycled 40S subunits following ABCE1-mediated dissociation of post-termination ribosomal complexes into subunits. The chain is Eukaryotic translation initiation factor 2D (EIF2D) from Bos taurus (Bovine).